Here is a 590-residue protein sequence, read N- to C-terminus: Aspartate--tRNA(Asp/Asn) ligase (590 aa).

Residue glutamate 175 participates in L-aspartate binding. The segment at 199 to 202 (QQYK) is aspartate. Residues arginine 221 and histidine 450 each contribute to the L-aspartate site. Position 221–223 (221–223 (RDE)) interacts with ATP. Glutamate 484 is a binding site for ATP. Arginine 491 serves as a coordination point for L-aspartate. An ATP-binding site is contributed by 536-539 (GVDR).

This sequence belongs to the class-II aminoacyl-tRNA synthetase family. Type 1 subfamily. Homodimer.

It is found in the cytoplasm. It catalyses the reaction tRNA(Asx) + L-aspartate + ATP = L-aspartyl-tRNA(Asx) + AMP + diphosphate. Its function is as follows. Aspartyl-tRNA synthetase with relaxed tRNA specificity since it is able to aspartylate not only its cognate tRNA(Asp) but also tRNA(Asn). Reaction proceeds in two steps: L-aspartate is first activated by ATP to form Asp-AMP and then transferred to the acceptor end of tRNA(Asp/Asn). This chain is Aspartate--tRNA(Asp/Asn) ligase, found in Nitrobacter winogradskyi (strain ATCC 25391 / DSM 10237 / CIP 104748 / NCIMB 11846 / Nb-255).